We begin with the raw amino-acid sequence, 693 residues long: Elongation factor G (693 aa).

Positions 6–286 (KYTRNIGIAA…AICRYLPSPI (281 aa)) constitute a tr-type G domain. Residues 15–22 (AHIDAGKT), 83–87 (DTPGH), and 137–140 (NKMD) each bind GTP.

It belongs to the TRAFAC class translation factor GTPase superfamily. Classic translation factor GTPase family. EF-G/EF-2 subfamily.

Its subcellular location is the cytoplasm. Functionally, catalyzes the GTP-dependent ribosomal translocation step during translation elongation. During this step, the ribosome changes from the pre-translocational (PRE) to the post-translocational (POST) state as the newly formed A-site-bound peptidyl-tRNA and P-site-bound deacylated tRNA move to the P and E sites, respectively. Catalyzes the coordinated movement of the two tRNA molecules, the mRNA and conformational changes in the ribosome. This Karelsulcia muelleri (strain GWSS) (Sulcia muelleri) protein is Elongation factor G.